The sequence spans 195 residues: ATP-dependent Clp protease proteolytic subunit (195 aa).

The active-site Nucleophile is the Ser-98. The active site involves His-123.

Belongs to the peptidase S14 family. Fourteen ClpP subunits assemble into 2 heptameric rings which stack back to back to give a disk-like structure with a central cavity, resembling the structure of eukaryotic proteasomes.

It is found in the cytoplasm. The enzyme catalyses Hydrolysis of proteins to small peptides in the presence of ATP and magnesium. alpha-casein is the usual test substrate. In the absence of ATP, only oligopeptides shorter than five residues are hydrolyzed (such as succinyl-Leu-Tyr-|-NHMec, and Leu-Tyr-Leu-|-Tyr-Trp, in which cleavage of the -Tyr-|-Leu- and -Tyr-|-Trp bonds also occurs).. In terms of biological role, cleaves peptides in various proteins in a process that requires ATP hydrolysis. Has a chymotrypsin-like activity. Plays a major role in the degradation of misfolded proteins. This is ATP-dependent Clp protease proteolytic subunit from Thermodesulfovibrio yellowstonii (strain ATCC 51303 / DSM 11347 / YP87).